Reading from the N-terminus, the 169-residue chain is 6,7-dimethyl-8-ribityllumazine synthase (169 aa).

5-amino-6-(D-ribitylamino)uracil is bound by residues F24, A58–E60, and A82–V84. E87–T88 contacts (2S)-2-hydroxy-3-oxobutyl phosphate. The active-site Proton donor is the H90. N115 lines the 5-amino-6-(D-ribitylamino)uracil pocket. (2S)-2-hydroxy-3-oxobutyl phosphate is bound at residue R129.

This sequence belongs to the DMRL synthase family.

The enzyme catalyses (2S)-2-hydroxy-3-oxobutyl phosphate + 5-amino-6-(D-ribitylamino)uracil = 6,7-dimethyl-8-(1-D-ribityl)lumazine + phosphate + 2 H2O + H(+). Its pathway is cofactor biosynthesis; riboflavin biosynthesis; riboflavin from 2-hydroxy-3-oxobutyl phosphate and 5-amino-6-(D-ribitylamino)uracil: step 1/2. Functionally, catalyzes the formation of 6,7-dimethyl-8-ribityllumazine by condensation of 5-amino-6-(D-ribitylamino)uracil with 3,4-dihydroxy-2-butanone 4-phosphate. This is the penultimate step in the biosynthesis of riboflavin. The protein is 6,7-dimethyl-8-ribityllumazine synthase of Cupriavidus metallidurans (strain ATCC 43123 / DSM 2839 / NBRC 102507 / CH34) (Ralstonia metallidurans).